The sequence spans 295 residues: Small ribosomal subunit protein uS2 (295 aa).

Positions 261-295 (QAKKFSKTKNIDEETNTEFEQVLNDADENKNSDNA) are disordered.

Belongs to the universal ribosomal protein uS2 family.

The sequence is that of Small ribosomal subunit protein uS2 from Rickettsia rickettsii (strain Sheila Smith).